The chain runs to 334 residues: Rhomboid-like protein 14, mitochondrial (334 aa).

A mitochondrion-targeting transit peptide spans 1–87 (MENFGEGRRS…RLFLSAFYHV (87 aa)). Helical transmembrane passes span 114 to 134 (EFAS…LLLA), 146 to 166 (AYYN…KVVL), 176 to 196 (VYGI…LVQM), and 197 to 217 (FVPN…IIYL). S156 serves as the catalytic Nucleophile. H206 (charge relay system) is an active-site residue. Residues 273–302 (GPGIWRCQSCTYDNSGWLSACEMCGSGRAR) form a RanBP2-type zinc finger.

Belongs to the peptidase S54 family.

It localises to the mitochondrion membrane. Probable rhomboid-type serine protease that catalyzes intramembrane proteolysis. May function in the heat-shock response pathway. In Arabidopsis thaliana (Mouse-ear cress), this protein is Rhomboid-like protein 14, mitochondrial.